The following is a 217-amino-acid chain: MADPLYSSLKTVNSTSKVTPESLVFQTKILTPEEAKNVINEKIAFKPLLLVPSLNLEKQGDRKESVASKKRKKLSSKEKKKLQLNVVPKIADYSQFKHLHSMWCSYILEVIAGCTGESLMAKLAKAEYQGAYMQVLRSKSTTRVGLEGICIHESKHMLSLITKENRVVRVPKQDSVMKVIVDVPQRKLVFELYTQHLLLRAGDRSNKRFKSKNTIDL.

The protein belongs to the eukaryotic/archaeal RNase P protein component 1 family.

It localises to the nucleus. The protein localises to the nucleolus. It carries out the reaction Endonucleolytic cleavage of RNA, removing 5'-extranucleotides from tRNA precursor.. Part of ribonuclease P, a protein complex that generates mature tRNA molecules by cleaving their 5'-ends. In Schizosaccharomyces pombe (strain 972 / ATCC 24843) (Fission yeast), this protein is Probable ribonuclease P protein subunit 1.